The sequence spans 371 residues: Chaperone protein DnaJ (371 aa).

The region spanning 5 to 70 (SYYDILGVSK…KKRQAYDQFG (66 aa)) is the J domain. The segment at 139-217 (GREYKIEIPR…CGGQGLQEKR (79 aa)) adopts a CR-type zinc-finger fold. Positions 152, 155, 169, 172, 191, 194, 205, and 208 each coordinate Zn(2+). 4 CXXCXGXG motif repeats span residues 152-159 (CGDCNGSG), 169-176 (CPDCGGSG), 191-198 (CPTCRGKG), and 205-212 (CKTCGGQG).

Belongs to the DnaJ family. Homodimer. Zn(2+) is required as a cofactor.

It localises to the cytoplasm. Its function is as follows. Participates actively in the response to hyperosmotic and heat shock by preventing the aggregation of stress-denatured proteins and by disaggregating proteins, also in an autonomous, DnaK-independent fashion. Unfolded proteins bind initially to DnaJ; upon interaction with the DnaJ-bound protein, DnaK hydrolyzes its bound ATP, resulting in the formation of a stable complex. GrpE releases ADP from DnaK; ATP binding to DnaK triggers the release of the substrate protein, thus completing the reaction cycle. Several rounds of ATP-dependent interactions between DnaJ, DnaK and GrpE are required for fully efficient folding. Also involved, together with DnaK and GrpE, in the DNA replication of plasmids through activation of initiation proteins. This chain is Chaperone protein DnaJ, found in Leptospira borgpetersenii serovar Hardjo-bovis (strain JB197).